The sequence spans 568 residues: MASPALISETEAWKDLKAHLEGIKRTHLRELMGDTERCQSMMVEFDNIFLDYSRQQAIPDTIKKLYKLADAAHLKQKIDRMYNGDHINSTENRSVLHVALRAPRDSAICSDGKNVVPDVWNVLDKIKDFSDRVRNGSWIGATGKELKDVIAVGIGGSFLGPLFVHTALQTDPEASKNARGRELRFLANVDPIDVARNISGLNPETTLVVVVSKTFTTAETMLNARTLREWISSALGPTAVAKHMVAVSTNIPLVEKFGIDPNNAFAFWDWVGGRYSVCSAVGVLPLSLQYGFAVVEKFLQGAHSIDQHFSSAPFEKNIPVLLGLLSVWNVSFLGYPARAILPYSQALEKLAPHIQQVSMESNGKGVSIDGLPLPFESGEIDFGEPGTNGQHSFYQLIHQGRVIPCDFIGVVKSQQPVYLKGEVVNNHDELMSNFFAQPDALAYGKTPEQLKNENVAEHLIPHKTFTGNRPSLSILLPTLDAYRIGQLLAIYEHRVAVQGFVWGINSFDQWGVELGKSLATQVRKQLHGSRVKGEPVEGFNFSTKTLLTKYLEATSDVPADPSTLLPNI.

Residue glutamate 360 is the Proton donor of the active site. Catalysis depends on residues histidine 391 and lysine 516.

This sequence belongs to the GPI family. As to quaternary structure, homodimer.

The protein resides in the cytoplasm. It catalyses the reaction alpha-D-glucose 6-phosphate = beta-D-fructose 6-phosphate. It participates in carbohydrate degradation; glycolysis; D-glyceraldehyde 3-phosphate and glycerone phosphate from D-glucose: step 2/4. In Clarkia mildrediae, this protein is Glucose-6-phosphate isomerase, cytosolic 1 (PGIC1).